Reading from the N-terminus, the 322-residue chain is Cysteine synthase (322 aa).

N8 and R35 together coordinate hydrogen sulfide. K42 is subject to N6-(pyridoxal phosphate)lysine. Residues N72 and 177–181 (GTGGT) contribute to the pyridoxal 5'-phosphate site. A hydrogen sulfide-binding site is contributed by L269. Position 273 (S273) interacts with pyridoxal 5'-phosphate.

It belongs to the cysteine synthase/cystathionine beta-synthase family. In terms of assembly, homodimer. Pyridoxal 5'-phosphate is required as a cofactor.

The enzyme catalyses O-acetyl-L-serine + hydrogen sulfide = L-cysteine + acetate. The protein operates within amino-acid biosynthesis; L-cysteine biosynthesis; L-cysteine from L-serine: step 2/2. The protein is Cysteine synthase (cysK) of Buchnera aphidicola subsp. Schizaphis graminum (strain Sg).